The chain runs to 185 residues: NEDD8-conjugating enzyme UBE2F (185 aa).

The interval 1–29 (MLTLASKLKRDDGVRGPRASNPASDSTRR) is interaction with UBA3. Positions 11-30 (DDGVRGPRASNPASDSTRRV) are disordered. Residues 32–185 (VRDKLLVKEV…VEDYIKRYAR (154 aa)) form the UBC core domain. The Glycyl thioester intermediate role is filled by Cys116.

Belongs to the ubiquitin-conjugating enzyme family. UBE2F subfamily.

The catalysed reaction is [E1 NEDD8-activating enzyme]-S-[NEDD8 protein]-yl-L-cysteine + [E2 NEDD8-conjugating enzyme]-L-cysteine = [E1 NEDD8-activating enzyme]-L-cysteine + [E2 NEDD8-conjugating enzyme]-S-[NEDD8-protein]-yl-L-cysteine.. The protein operates within protein modification; protein neddylation. In terms of biological role, accepts the ubiquitin-like protein NEDD8 from the UBA3-NAE1 E1 complex and catalyzes its covalent attachment to other proteins. Together with the E3 ubiquitin ligase RNF7/RBX2, specifically neddylates cullin-5 (CUL5). Does not neddylate CUL1, CUL2, CUL3, CUL4A or CUL4B. The protein is NEDD8-conjugating enzyme UBE2F (UBE2F) of Gallus gallus (Chicken).